The following is a 430-amino-acid chain: Glutamate-1-semialdehyde 2,1-aminomutase (430 aa).

At lysine 265 the chain carries N6-(pyridoxal phosphate)lysine.

This sequence belongs to the class-III pyridoxal-phosphate-dependent aminotransferase family. HemL subfamily. Homodimer. Pyridoxal 5'-phosphate serves as cofactor.

The protein localises to the cytoplasm. It catalyses the reaction (S)-4-amino-5-oxopentanoate = 5-aminolevulinate. The protein operates within porphyrin-containing compound metabolism; protoporphyrin-IX biosynthesis; 5-aminolevulinate from L-glutamyl-tRNA(Glu): step 2/2. This is Glutamate-1-semialdehyde 2,1-aminomutase from Shewanella sp. (strain MR-7).